Here is a 635-residue protein sequence, read N- to C-terminus: Extracellular metalloproteinase 1 (635 aa).

The signal sequence occupies residues 1–19; sequence MHGLLLAAGLLSLPLHVLA. The propeptide occupies 20-246; sequence HPQPSTSTSL…VHNVVDYVAH (227 aa). An N-linked (GlcNAc...) asparagine glycan is attached at Asn-287. Residue His-430 participates in Zn(2+) binding. Residue Glu-431 is part of the active site. A Zn(2+)-binding site is contributed by His-434. Asn-475, Asn-594, and Asn-623 each carry an N-linked (GlcNAc...) asparagine glycan.

It belongs to the peptidase M36 family. Requires Zn(2+) as cofactor.

It localises to the secreted. In terms of biological role, secreted metalloproteinase probably acting as a virulence factor. This is Extracellular metalloproteinase 1 (MEP1) from Trichophyton rubrum (Athlete's foot fungus).